Reading from the N-terminus, the 327-residue chain is Biotin synthase (327 aa).

Residues 49 to 282 form the Radical SAM core domain; that stretch reads FNKEKIDLCS…KKVIRLCGGR (234 aa). Cys-67, Cys-71, and Cys-74 together coordinate [4Fe-4S] cluster. [2Fe-2S] cluster is bound by residues Ser-110, Cys-142, Cys-201, and Arg-277.

This sequence belongs to the radical SAM superfamily. Biotin synthase family. In terms of assembly, homodimer. [4Fe-4S] cluster serves as cofactor. Requires [2Fe-2S] cluster as cofactor.

The catalysed reaction is (4R,5S)-dethiobiotin + (sulfur carrier)-SH + 2 reduced [2Fe-2S]-[ferredoxin] + 2 S-adenosyl-L-methionine = (sulfur carrier)-H + biotin + 2 5'-deoxyadenosine + 2 L-methionine + 2 oxidized [2Fe-2S]-[ferredoxin]. It functions in the pathway cofactor biosynthesis; biotin biosynthesis; biotin from 7,8-diaminononanoate: step 2/2. Its function is as follows. Catalyzes the conversion of dethiobiotin (DTB) to biotin by the insertion of a sulfur atom into dethiobiotin via a radical-based mechanism. This is Biotin synthase from Methanococcus maripaludis (strain C7 / ATCC BAA-1331).